Consider the following 197-residue polypeptide: Probable nicotinate-nucleotide adenylyltransferase (197 aa).

The protein belongs to the NadD family.

The enzyme catalyses nicotinate beta-D-ribonucleotide + ATP + H(+) = deamido-NAD(+) + diphosphate. The protein operates within cofactor biosynthesis; NAD(+) biosynthesis; deamido-NAD(+) from nicotinate D-ribonucleotide: step 1/1. Its function is as follows. Catalyzes the reversible adenylation of nicotinate mononucleotide (NaMN) to nicotinic acid adenine dinucleotide (NaAD). This chain is Probable nicotinate-nucleotide adenylyltransferase, found in Porphyromonas gingivalis (strain ATCC 33277 / DSM 20709 / CIP 103683 / JCM 12257 / NCTC 11834 / 2561).